Reading from the N-terminus, the 943-residue chain is Protein translocase subunit SecA (943 aa).

Residues Gln77, 95-99 (GEGKT), and Asp484 contribute to the ATP site.

Belongs to the SecA family. In terms of assembly, monomer and homodimer. Part of the essential Sec protein translocation apparatus which comprises SecA, SecYEG and auxiliary proteins SecDF. Other proteins may also be involved.

It localises to the cell membrane. The protein localises to the cytoplasm. The enzyme catalyses ATP + H2O + cellular proteinSide 1 = ADP + phosphate + cellular proteinSide 2.. In terms of biological role, part of the Sec protein translocase complex. Interacts with the SecYEG preprotein conducting channel. Has a central role in coupling the hydrolysis of ATP to the transfer of proteins into and across the cell membrane, serving as an ATP-driven molecular motor driving the stepwise translocation of polypeptide chains across the membrane. The protein is Protein translocase subunit SecA of Mesoplasma florum (strain ATCC 33453 / NBRC 100688 / NCTC 11704 / L1) (Acholeplasma florum).